We begin with the raw amino-acid sequence, 630 residues long: Sodium-dependent serotonin transporter (630 aa).

At 1–87 the chain is on the cytoplasmic side; it reads METTPLNSQK…ERETWGKKVD (87 aa). The tract at residues 31–59 is disordered; that stretch reads VPTPGDKVESGQISNGYSAVPSPGAGDDT. A Phosphotyrosine modification is found at Tyr-47. A helical membrane pass occupies residues 88 to 112; sequence FLLSVIGYAVDLGNVWRFPYICYQN. 5 residues coordinate Na(+): Gly-94, Ala-96, Val-97, Asp-98, and Asn-101. Residue Asp-98 coordinates serotonin. At 113–115 the chain is on the extracellular side; that stretch reads GGG. The chain crosses the membrane as a helical span at residues 116–135; it reads AFLIPYTIMAIFGGIPLFYM. Topologically, residues 136–160 are cytoplasmic; that stretch reads ELALGQYHRNGCISIWRKICPIFKG. The residue at position 142 (Tyr-142) is a Phosphotyrosine. The helical transmembrane segment at 161-186 threads the bilayer; it reads IGYAICIIAFYIASYYNTIMAWALYY. Over 187–252 the chain is Extracellular; the sequence is LISSFTDQLP…KGLQDLGGIS (66 aa). A disulfide bridge connects residues Cys-200 and Cys-209. 2 N-linked (GlcNAc...) asparagine glycosylation sites follow: Asn-208 and Asn-217. The helical transmembrane segment at 253–271 threads the bilayer; sequence WQLALCIMLIFTVIYFSIW. Over 272-277 the chain is Cytoplasmic; sequence KGVKTS. At Thr-276 the chain carries Phosphothreonine. Residues 278-297 form a helical membrane-spanning segment; the sequence is GKVVWVTATFPYIILSVLLV. Residues 298–324 lie on the Extracellular side of the membrane; the sequence is RGATLPGAWRGVLFYLKPNWQKLLETG. Residues 325 to 347 traverse the membrane as a helical segment; it reads VWIDAAAQIFFSLGPGFGVLLAF. Ser-336 lines the Na(+) pocket. Topologically, residues 348–360 are cytoplasmic; that stretch reads ASYNKFNNNCYQD. The chain crosses the membrane as a helical span at residues 361–380; sequence ALVTSVVNCMTSFVSGFVIF. Position 368 (Asn-368) interacts with Na(+). Over 381–421 the chain is Extracellular; the sequence is TVLGYMAEMRNEDVSEVAKDAGPSLLFITYAEAIANMPAST. A helical transmembrane segment spans residues 422-443; sequence FFAIIFFLMLITLGLDSTFAGL. Positions 434, 437, and 438 each coordinate Na(+). Thr-439 contacts serotonin. The Cytoplasmic portion of the chain corresponds to 444–463; sequence EGVITAVLDEFPHIWAKRRE. Residues 464 to 483 form a helical membrane-spanning segment; the sequence is WFVLAVVITCFFGSLVTLTF. The Extracellular portion of the chain corresponds to 484–494; it reads GGAYVVKLLEE. 2 residues coordinate serotonin: Glu-494 and Tyr-495. Residues 495 to 516 traverse the membrane as a helical segment; sequence YATGPAVLTVALIEAVAVSWFY. Residues 517-538 lie on the Cytoplasmic side of the membrane; it reads GITQFCRDVKEMLGFSPGWFWR. Residues 539–558 traverse the membrane as a helical segment; the sequence is ICWVAISPLFLLFIICSFLM. The serotonin site is built by Phe-556 and Ser-559. Over 559 to 574 the chain is Extracellular; that stretch reads SPPQLRLFQYNYPHWS. The chain crosses the membrane as a helical span at residues 575-595; that stretch reads IILGYCIGTSSFVCIPTYIAY. The Cytoplasmic segment spans residues 596-630; the sequence is RLISTPGTFKERIIKSITPETPTEIPCGDVRLNAV. The tract at residues 616–624 is interaction with RAB4A; that stretch reads TPTEIPCGD.

This sequence belongs to the sodium:neurotransmitter symporter (SNF) (TC 2.A.22) family. SLC6A4 subfamily. In terms of assembly, monomer or homooligomer. Interacts (via C-terminus) with SCAMP2; the interaction is direct and retains transporter molecules intracellularly. Interacts with filamentous actin and STX1A. Interacts (via the N-terminus) with STX1A (via the H3 domain); this interaction regulates SLC4A6 channel conductance. Interacts with SEC23A, SEC24C and PATJ. Interacts with NOS1; the interaction may diminish the cell surface localization of SERT in the brain and, correspondingly, reduce serotonin reuptake. Interacts with TGFB1I1. Interacts with ITGAV:ITGB3. Interacts (via C-terminus) with ITGB3; this interaction regulates SLC6A4 trafficking. Phosphorylation at Thr-276 increases 5-HT uptake and is required for cGMP-mediated SERT regulation.

The protein localises to the cell membrane. Its subcellular location is the endomembrane system. It localises to the endosome membrane. The protein resides in the synapse. It is found in the cell junction. The protein localises to the focal adhesion. Its subcellular location is the cell projection. It localises to the neuron projection. The catalysed reaction is serotonin(out) + K(+)(in) + Na(+)(out) + H(+)(in) = serotonin(in) + K(+)(out) + Na(+)(in) + H(+)(out). Functionally, serotonin transporter that cotransports serotonin with one Na(+) ion in exchange for one K(+) ion and possibly one proton in an overall electroneutral transport cycle. Transports serotonin across the plasma membrane from the extracellular compartment to the cytosol thus limiting serotonin intercellular signaling. Essential for serotonin homeostasis in the central nervous system. In the developing somatosensory cortex, acts in glutamatergic neurons to control serotonin uptake and its trophic functions accounting for proper spatial organization of cortical neurons and elaboration of sensory circuits. In the mature cortex, acts primarily in brainstem raphe neurons to mediate serotonin uptake from the synaptic cleft back into the pre-synaptic terminal thus terminating serotonin signaling at the synapse. Modulates mucosal serotonin levels in the gastrointestinal tract through uptake and clearance of serotonin in enterocytes. Required for enteric neurogenesis and gastrointestinal reflexes. Regulates blood serotonin levels by ensuring rapid high affinity uptake of serotonin from plasma to platelets, where it is further stored in dense granules via vesicular monoamine transporters and then released upon stimulation. Mechanistically, the transport cycle starts with an outward-open conformation having Na1(+) and Cl(-) sites occupied. The binding of a second extracellular Na2(+) ion and serotonin substrate leads to structural changes to outward-occluded to inward-occluded to inward-open, where the Na2(+) ion and serotonin are released into the cytosol. Binding of intracellular K(+) ion induces conformational transitions to inward-occluded to outward-open and completes the cycle by releasing K(+) possibly together with a proton bound to Asp-98 into the extracellular compartment. Na1(+) and Cl(-) ions remain bound throughout the transport cycle. Additionally, displays serotonin-induced channel-like conductance for monovalent cations, mainly Na(+) ions. The channel activity is uncoupled from the transport cycle and may contribute to the membrane resting potential or excitability. This Macaca mulatta (Rhesus macaque) protein is Sodium-dependent serotonin transporter (SLC6A4).